The chain runs to 498 residues: Probable cytosol aminopeptidase (498 aa).

Residues lysine 267 and aspartate 272 each coordinate Mn(2+). Lysine 279 is a catalytic residue. 3 residues coordinate Mn(2+): aspartate 290, aspartate 349, and glutamate 351. The active site involves arginine 353.

Belongs to the peptidase M17 family. Requires Mn(2+) as cofactor.

It is found in the cytoplasm. It carries out the reaction Release of an N-terminal amino acid, Xaa-|-Yaa-, in which Xaa is preferably Leu, but may be other amino acids including Pro although not Arg or Lys, and Yaa may be Pro. Amino acid amides and methyl esters are also readily hydrolyzed, but rates on arylamides are exceedingly low.. The catalysed reaction is Release of an N-terminal amino acid, preferentially leucine, but not glutamic or aspartic acids.. In terms of biological role, presumably involved in the processing and regular turnover of intracellular proteins. Catalyzes the removal of unsubstituted N-terminal amino acids from various peptides. In Dechloromonas aromatica (strain RCB), this protein is Probable cytosol aminopeptidase.